Here is a 483-residue protein sequence, read N- to C-terminus: Glutamate--tRNA ligase (483 aa).

The 'HIGH' region motif lies at 11–21 (PSPTGLLHIGN). A 'KMSKS' region motif is present at residues 255–259 (KLSKR). Residue Lys258 participates in ATP binding.

Belongs to the class-I aminoacyl-tRNA synthetase family. Glutamate--tRNA ligase type 1 subfamily. As to quaternary structure, monomer.

Its subcellular location is the cytoplasm. It carries out the reaction tRNA(Glu) + L-glutamate + ATP = L-glutamyl-tRNA(Glu) + AMP + diphosphate. Catalyzes the attachment of glutamate to tRNA(Glu) in a two-step reaction: glutamate is first activated by ATP to form Glu-AMP and then transferred to the acceptor end of tRNA(Glu). The protein is Glutamate--tRNA ligase of Lactococcus lactis subsp. lactis (strain IL1403) (Streptococcus lactis).